The primary structure comprises 453 residues: Flap endonuclease 1 (453 aa).

Positions Met-1–Arg-105 are N-domain. Asp-34 is a binding site for Mg(2+). 2 residues coordinate DNA: Arg-47 and Arg-71. 5 residues coordinate Mg(2+): Asp-87, Glu-159, Glu-161, Asp-180, and Asp-182. The segment at Asp-123 to His-254 is I-domain. Glu-159 lines the DNA pocket. The DNA site is built by Gly-232 and Asp-234. Mg(2+) is bound at residue Asp-234. Disordered stretches follow at residues Glu-273–Ser-336 and Arg-409–Asn-453. Basic residues predominate over residues Lys-320–Val-333. The interval Gln-406–Phe-414 is interaction with PCNA. The span at Lys-417–Ser-446 shows a compositional bias: basic and acidic residues.

This sequence belongs to the XPG/RAD2 endonuclease family. FEN1 subfamily. As to quaternary structure, interacts with PCNA. Three molecules of FEN1 bind to one PCNA trimer with each molecule binding to one PCNA monomer. PCNA stimulates the nuclease activity without altering cleavage specificity. Mg(2+) is required as a cofactor. In terms of processing, phosphorylated. Phosphorylation upon DNA damage induces relocalization to the nuclear plasma.

Its subcellular location is the nucleus. The protein localises to the nucleolus. It localises to the nucleoplasm. It is found in the mitochondrion. In terms of biological role, structure-specific nuclease with 5'-flap endonuclease and 5'-3' exonuclease activities involved in DNA replication and repair. During DNA replication, cleaves the 5'-overhanging flap structure that is generated by displacement synthesis when DNA polymerase encounters the 5'-end of a downstream Okazaki fragment. It enters the flap from the 5'-end and then tracks to cleave the flap base, leaving a nick for ligation. Also involved in the long patch base excision repair (LP-BER) pathway, by cleaving within the apurinic/apyrimidinic (AP) site-terminated flap. Acts as a genome stabilization factor that prevents flaps from equilibrating into structures that lead to duplications and deletions. Also possesses 5'-3' exonuclease activity on nicked or gapped double-stranded DNA, and exhibits RNase H activity. Also involved in replication and repair of rDNA and in repairing mitochondrial DNA. The sequence is that of Flap endonuclease 1 from Cryptococcus neoformans var. neoformans serotype D (strain B-3501A) (Filobasidiella neoformans).